Consider the following 199-residue polypeptide: Pyridoxal 5'-phosphate synthase subunit PdxT (199 aa).

52–54 contacts L-glutamine; the sequence is GES. Cys84 (nucleophile) is an active-site residue. Residues Arg115 and 143-144 contribute to the L-glutamine site; that span reads IR. Catalysis depends on charge relay system residues His179 and Glu181.

Belongs to the glutaminase PdxT/SNO family. In the presence of PdxS, forms a dodecamer of heterodimers. Only shows activity in the heterodimer.

It catalyses the reaction aldehydo-D-ribose 5-phosphate + D-glyceraldehyde 3-phosphate + L-glutamine = pyridoxal 5'-phosphate + L-glutamate + phosphate + 3 H2O + H(+). The catalysed reaction is L-glutamine + H2O = L-glutamate + NH4(+). It participates in cofactor biosynthesis; pyridoxal 5'-phosphate biosynthesis. Catalyzes the hydrolysis of glutamine to glutamate and ammonia as part of the biosynthesis of pyridoxal 5'-phosphate. The resulting ammonia molecule is channeled to the active site of PdxS. The protein is Pyridoxal 5'-phosphate synthase subunit PdxT of Methanosarcina mazei (strain ATCC BAA-159 / DSM 3647 / Goe1 / Go1 / JCM 11833 / OCM 88) (Methanosarcina frisia).